The sequence spans 55 residues: Large ribosomal subunit protein bL32 (55 aa).

Belongs to the bacterial ribosomal protein bL32 family.

The protein is Large ribosomal subunit protein bL32 of Aeromonas hydrophila subsp. hydrophila (strain ATCC 7966 / DSM 30187 / BCRC 13018 / CCUG 14551 / JCM 1027 / KCTC 2358 / NCIMB 9240 / NCTC 8049).